A 391-amino-acid polypeptide reads, in one-letter code: Cdc42 effector protein 1 (391 aa).

Residues Ser-19 and Ser-27 each carry the phosphoserine modification. Thr-34 is modified (phosphothreonine). The region spanning 38–52 is the CRIB domain; the sequence is ISHPLGDFRHTMHVG. A Phosphoserine modification is found at Ser-39. Arg-53 carries the post-translational modification Omega-N-methylarginine. Residues Ser-65, Ser-73, Ser-77, Ser-101, Ser-113, Ser-121, and Ser-139 each carry the phosphoserine modification. The tract at residues 163 to 189 is disordered; sequence ISRLPRSEKPHDRDRDGSFPSEPGLRR. Residues 167 to 179 are compositionally biased toward basic and acidic residues; the sequence is PRSEKPHDRDRDG. 4 positions are modified to phosphoserine: Ser-180, Ser-190, Ser-192, and Ser-195. A run of 8 repeats spans residues 220 to 226, 227 to 233, 234 to 240, 241 to 247, 248 to 254, 255 to 261, 262 to 268, and 269 to 275. Positions 220–275 are 8 X 7 AA tandem repeats of [PT]-[AT]-A-[ENT]-[PT]-[PTS]-[AG]; it reads PAAETPAPAANPPAPTANPTGPAANPPATTANPPAPAANPSAPAATPTGPAANPPA. The interval 221–338 is disordered; the sequence is AAETPAPAAN…HHYPEMDARQ (118 aa). Positions 236–270 are enriched in low complexity; sequence ANPTGPAANPPATTANPPAPAANPSAPAATPTGPA. A Phosphoserine modification is found at Ser-303. A compositionally biased stretch (basic and acidic residues) spans 327 to 338; it reads GGHHYPEMDARQ. Ser-350 and Ser-353 each carry phosphoserine. Positions 354 to 391 are disordered; it reads LDEEWRAPQAGSRTPVPSTVQANTFEFADAEEDDEVKV. The segment covering 364–377 has biased composition (polar residues); it reads GSRTPVPSTVQANT. Residues 381-391 are compositionally biased toward acidic residues; it reads ADAEEDDEVKV.

This sequence belongs to the BORG/CEP family. As to quaternary structure, interacts with RHOQ and CDC42, in a GTP-dependent manner. Endothelial and bone marrow stromal cells.

It localises to the endomembrane system. The protein localises to the cytoplasm. It is found in the cytoskeleton. Functionally, probably involved in the organization of the actin cytoskeleton. Induced membrane extensions in fibroblasts. This Homo sapiens (Human) protein is Cdc42 effector protein 1 (CDC42EP1).